The primary structure comprises 340 residues: UPF0284 protein Saci_0020 (340 aa).

It belongs to the UPF0284 family.

The polypeptide is UPF0284 protein Saci_0020 (Sulfolobus acidocaldarius (strain ATCC 33909 / DSM 639 / JCM 8929 / NBRC 15157 / NCIMB 11770)).